The primary structure comprises 830 residues: Lon protease (830 aa).

The 196-residue stretch at 20 to 215 (LPAVAIRDVV…LLIKILANEV (196 aa)) folds into the Lon N-terminal domain. 367–374 (GPPGVGKT) lines the ATP pocket. Residues 602–781 (ENGVGISTGL…DEIVKIAFEK (180 aa)) enclose the Lon proteolytic domain. Residues Ser-687 and Lys-730 contribute to the active site. A disordered region spans residues 784–830 (PKSSFKKSKTAPKKESAKKAAKSKKPAVKKPAVKKTKQVKKTAKKKK). Residues 802 to 830 (KAAKSKKPAVKKPAVKKTKQVKKTAKKKK) show a composition bias toward basic residues.

It belongs to the peptidase S16 family. In terms of assembly, homohexamer. Organized in a ring with a central cavity.

It localises to the cytoplasm. It catalyses the reaction Hydrolysis of proteins in presence of ATP.. Its function is as follows. ATP-dependent serine protease that mediates the selective degradation of mutant and abnormal proteins as well as certain short-lived regulatory proteins. Required for cellular homeostasis and for survival from DNA damage and developmental changes induced by stress. Degrades polypeptides processively to yield small peptide fragments that are 5 to 10 amino acids long. Binds to DNA in a double-stranded, site-specific manner. The sequence is that of Lon protease from Elusimicrobium minutum (strain Pei191).